The following is a 131-amino-acid chain: Large ribosomal subunit protein bL17 (131 aa).

This sequence belongs to the bacterial ribosomal protein bL17 family. In terms of assembly, part of the 50S ribosomal subunit. Contacts protein L32.

The polypeptide is Large ribosomal subunit protein bL17 (Methylibium petroleiphilum (strain ATCC BAA-1232 / LMG 22953 / PM1)).